The sequence spans 476 residues: Cysteine--tRNA ligase (476 aa).

C29 contributes to the Zn(2+) binding site. Positions 31 to 41 (PTVYDYTHIGH) match the 'HIGH' region motif. C209, H234, and E238 together coordinate Zn(2+). The 'KMSKS' region motif lies at 266–270 (KMSKS). K269 is an ATP binding site.

This sequence belongs to the class-I aminoacyl-tRNA synthetase family. Zn(2+) is required as a cofactor.

Its subcellular location is the cytoplasm. It carries out the reaction tRNA(Cys) + L-cysteine + ATP = L-cysteinyl-tRNA(Cys) + AMP + diphosphate. This Thermococcus kodakarensis (strain ATCC BAA-918 / JCM 12380 / KOD1) (Pyrococcus kodakaraensis (strain KOD1)) protein is Cysteine--tRNA ligase.